Reading from the N-terminus, the 147-residue chain is Putative nickel-responsive regulator (147 aa).

His76, His87, His89, and Cys95 together coordinate Ni(2+).

This sequence belongs to the transcriptional regulatory CopG/NikR family. Ni(2+) serves as cofactor.

Functionally, transcriptional regulator. The protein is Putative nickel-responsive regulator of Rhodopseudomonas palustris (strain TIE-1).